A 336-amino-acid chain; its full sequence is MIEADRLISADIQQPEEEIIDRAIRPKLLAEYVGQPQVREQMEIFIQAAKLRHDALDHLLIFGPPGLGKTTLANIIANEMGVNLRTTSGPVLEKAGDLAAMLTNLEPHDVLFIDEIHRLSPVVEEILYPAMEDYQLDIMIGEGPAARSIKIDLPPFTLVGATTRAGSLTSPLRDRFGIVQRLEFYNVDDLQHIVARSASFMGLEITAEGARQIAMRSRGTPRITNRLLRRVRDFAQVKGNGEIDEDIASKALDMLNVDAAGFDYLDRKLLFAIIDKFMGGPVGLDNLAAAIGEERETIEDVLEPYLIQQGFIQRTPRGRVATNHAYRHFNRIMEAP.

The segment at 4-185 is large ATPase domain (RuvB-L); it reads ADRLISADIQ…FGIVQRLEFY (182 aa). Residues Ile24, Arg25, Gly66, Lys69, Thr70, Thr71, 132 to 134, Arg175, Tyr185, and Arg222 contribute to the ATP site; that span reads EDY. A Mg(2+)-binding site is contributed by Thr70. The small ATPAse domain (RuvB-S) stretch occupies residues 186-256; it reads NVDDLQHIVA…IASKALDMLN (71 aa). The interval 259–336 is head domain (RuvB-H); that stretch reads AAGFDYLDRK…RHFNRIMEAP (78 aa). Residues Arg295, Arg314, and Arg319 each contribute to the DNA site.

It belongs to the RuvB family. As to quaternary structure, homohexamer. Forms an RuvA(8)-RuvB(12)-Holliday junction (HJ) complex. HJ DNA is sandwiched between 2 RuvA tetramers; dsDNA enters through RuvA and exits via RuvB. An RuvB hexamer assembles on each DNA strand where it exits the tetramer. Each RuvB hexamer is contacted by two RuvA subunits (via domain III) on 2 adjacent RuvB subunits; this complex drives branch migration. In the full resolvosome a probable DNA-RuvA(4)-RuvB(12)-RuvC(2) complex forms which resolves the HJ.

The protein resides in the cytoplasm. The catalysed reaction is ATP + H2O = ADP + phosphate + H(+). Its function is as follows. The RuvA-RuvB-RuvC complex processes Holliday junction (HJ) DNA during genetic recombination and DNA repair, while the RuvA-RuvB complex plays an important role in the rescue of blocked DNA replication forks via replication fork reversal (RFR). RuvA specifically binds to HJ cruciform DNA, conferring on it an open structure. The RuvB hexamer acts as an ATP-dependent pump, pulling dsDNA into and through the RuvAB complex. RuvB forms 2 homohexamers on either side of HJ DNA bound by 1 or 2 RuvA tetramers; 4 subunits per hexamer contact DNA at a time. Coordinated motions by a converter formed by DNA-disengaged RuvB subunits stimulates ATP hydrolysis and nucleotide exchange. Immobilization of the converter enables RuvB to convert the ATP-contained energy into a lever motion, pulling 2 nucleotides of DNA out of the RuvA tetramer per ATP hydrolyzed, thus driving DNA branch migration. The RuvB motors rotate together with the DNA substrate, which together with the progressing nucleotide cycle form the mechanistic basis for DNA recombination by continuous HJ branch migration. Branch migration allows RuvC to scan DNA until it finds its consensus sequence, where it cleaves and resolves cruciform DNA. In Proteus mirabilis (strain HI4320), this protein is Holliday junction branch migration complex subunit RuvB.